The following is a 154-amino-acid chain: Nitrogen regulatory protein (154 aa).

The PTS EIIA type-2 domain maps to 6 to 150; that stretch reads QILTPGRSLV…EALYQIVVDV (145 aa). Histidine 68 functions as the Tele-phosphohistidine intermediate in the catalytic mechanism.

The protein localises to the cytoplasm. Functionally, seems to have a role in regulating nitrogen assimilation. This chain is Nitrogen regulatory protein (ptsN), found in Pseudomonas aeruginosa (strain ATCC 15692 / DSM 22644 / CIP 104116 / JCM 14847 / LMG 12228 / 1C / PRS 101 / PAO1).